Consider the following 170-residue polypeptide: Large ribosomal subunit protein uL11 (170 aa).

This sequence belongs to the universal ribosomal protein uL11 family. In terms of assembly, part of the ribosomal stalk of the 50S ribosomal subunit. Interacts with L10 and the large rRNA to form the base of the stalk. L10 forms an elongated spine to which L12 dimers bind in a sequential fashion forming a multimeric L10(L12)X complex.

Its function is as follows. Forms part of the ribosomal stalk which helps the ribosome interact with GTP-bound translation factors. The protein is Large ribosomal subunit protein uL11 of Saccharolobus islandicus (strain M.16.27) (Sulfolobus islandicus).